The chain runs to 589 residues: ATP-dependent lipid A-core flippase (589 aa).

6 helical membrane passes run 37-57 (ALAI…PALL), 72-92 (LWLV…SGFL), 151-171 (IMKL…LVYL), 173-193 (WKLM…IQVL), 260-280 (SAIT…IALL), and 286-306 (TTTV…IAPV). The ABC transmembrane type-1 domain maps to 37 to 318 (ALAIGATIVA…LSDAATPVTR (282 aa)). The region spanning 350 to 584 (IEFADVSVIY…NGAYAHLYRL (235 aa)) is the ABC transporter domain. ATP is bound at residue 384-391 (GASGSGKT).

This sequence belongs to the ABC transporter superfamily. Lipid exporter (TC 3.A.1.106) family. Homodimer.

It localises to the cell inner membrane. It catalyses the reaction ATP + H2O + lipid A-core oligosaccharideSide 1 = ADP + phosphate + lipid A-core oligosaccharideSide 2.. Involved in lipopolysaccharide (LPS) biosynthesis. Translocates lipid A-core from the inner to the outer leaflet of the inner membrane. Transmembrane domains (TMD) form a pore in the inner membrane and the ATP-binding domain (NBD) is responsible for energy generation. This Polaromonas sp. (strain JS666 / ATCC BAA-500) protein is ATP-dependent lipid A-core flippase.